Consider the following 490-residue polypeptide: Flap endonuclease 1 (490 aa).

Residues 1–106 (MGIKGLTKFL…DELTKRDERR (106 aa)) are N-domain. D34 is a Mg(2+) binding site. R47 and R72 together coordinate DNA. Mg(2+) is bound by residues D88, E160, E162, D181, and D183. The segment at 124–266 (LIKKQSVRTI…STAYKLLKKY (143 aa)) is I-domain. E160 is a binding site for DNA. Positions 244 and 246 each coordinate DNA. Mg(2+) is bound at residue D246. The tract at residues 351-359 (SQTCLDGFF) is interaction with PCNA. Disordered regions lie at residues 364-396 (NERK…SLSC) and 421-490 (SSQA…SDED). Positions 430 to 442 (ENSSEAPNQSSEI) are enriched in polar residues. Residues 443-454 (KVNKIEENKDSE) show a composition bias toward basic and acidic residues. The span at 455–469 (SSTVENTPSLQTKSP) shows a compositional bias: polar residues.

The protein belongs to the XPG/RAD2 endonuclease family. FEN1 subfamily. In terms of assembly, interacts with PCNA. Three molecules of FEN1 bind to one PCNA trimer with each molecule binding to one PCNA monomer. PCNA stimulates the nuclease activity without altering cleavage specificity. Mg(2+) is required as a cofactor. Phosphorylated. Phosphorylation upon DNA damage induces relocalization to the nuclear plasma.

The protein localises to the nucleus. The protein resides in the nucleolus. It is found in the nucleoplasm. It localises to the mitochondrion. Its function is as follows. Structure-specific nuclease with 5'-flap endonuclease and 5'-3' exonuclease activities involved in DNA replication and repair. During DNA replication, cleaves the 5'-overhanging flap structure that is generated by displacement synthesis when DNA polymerase encounters the 5'-end of a downstream Okazaki fragment. It enters the flap from the 5'-end and then tracks to cleave the flap base, leaving a nick for ligation. Also involved in the long patch base excision repair (LP-BER) pathway, by cleaving within the apurinic/apyrimidinic (AP) site-terminated flap. Acts as a genome stabilization factor that prevents flaps from equilibrating into structures that lead to duplications and deletions. Also possesses 5'-3' exonuclease activity on nicked or gapped double-stranded DNA, and exhibits RNase H activity. Also involved in replication and repair of rDNA and in repairing mitochondrial DNA. In Cryptosporidium parvum (strain Iowa II), this protein is Flap endonuclease 1.